The following is a 476-amino-acid chain: Ribosomal protein uS12 methylthiotransferase RimO (476 aa).

The 117-residue stretch at Lys-7–Ser-123 folds into the MTTase N-terminal domain. Cys-16, Cys-52, Cys-86, Cys-158, Cys-162, and Cys-165 together coordinate [4Fe-4S] cluster. One can recognise a Radical SAM core domain in the interval Ser-144 to Glu-373. The region spanning Lys-376–Glu-444 is the TRAM domain. Residues Arg-445–His-459 are compositionally biased toward basic and acidic residues. The segment at Arg-445 to Glu-476 is disordered.

This sequence belongs to the methylthiotransferase family. RimO subfamily. Requires [4Fe-4S] cluster as cofactor.

The protein resides in the cytoplasm. It catalyses the reaction L-aspartate(89)-[ribosomal protein uS12]-hydrogen + (sulfur carrier)-SH + AH2 + 2 S-adenosyl-L-methionine = 3-methylsulfanyl-L-aspartate(89)-[ribosomal protein uS12]-hydrogen + (sulfur carrier)-H + 5'-deoxyadenosine + L-methionine + A + S-adenosyl-L-homocysteine + 2 H(+). Functionally, catalyzes the methylthiolation of an aspartic acid residue of ribosomal protein uS12. The sequence is that of Ribosomal protein uS12 methylthiotransferase RimO from Myxococcus xanthus (strain DK1622).